We begin with the raw amino-acid sequence, 97 residues long: Small ribosomal subunit protein bS20 (97 aa).

This sequence belongs to the bacterial ribosomal protein bS20 family.

In terms of biological role, binds directly to 16S ribosomal RNA. The polypeptide is Small ribosomal subunit protein bS20 (Prochlorococcus marinus (strain AS9601)).